The following is a 93-amino-acid chain: Small ribosomal subunit protein uS19 (93 aa).

The segment at 73-93 (EFSPTRTFRGHVKDDRKSKRR) is disordered. Residues 83-93 (HVKDDRKSKRR) show a composition bias toward basic and acidic residues.

Belongs to the universal ribosomal protein uS19 family.

Its function is as follows. Protein S19 forms a complex with S13 that binds strongly to the 16S ribosomal RNA. This Streptomyces coelicolor (strain ATCC BAA-471 / A3(2) / M145) protein is Small ribosomal subunit protein uS19.